The primary structure comprises 27 residues: NADH-ubiquinone oxidoreductase chain 1 (27 aa).

Residues 3–23 traverse the membrane as a helical segment; the sequence is LIFPLVGSLLLVICVMVGVAF.

It belongs to the complex I subunit 1 family.

It is found in the mitochondrion inner membrane. It catalyses the reaction a ubiquinone + NADH + 5 H(+)(in) = a ubiquinol + NAD(+) + 4 H(+)(out). Functionally, core subunit of the mitochondrial membrane respiratory chain NADH dehydrogenase (Complex I) that is believed to belong to the minimal assembly required for catalysis. Complex I functions in the transfer of electrons from NADH to the respiratory chain. The immediate electron acceptor for the enzyme is believed to be ubiquinone. This chain is NADH-ubiquinone oxidoreductase chain 1 (ND1), found in Simulium vittatum (Striped black fly).